Consider the following 486-residue polypeptide: Glutamyl-tRNA(Gln) amidotransferase subunit A (486 aa).

Residues K74 and S149 each act as charge relay system in the active site. S173 acts as the Acyl-ester intermediate in catalysis.

It belongs to the amidase family. GatA subfamily. As to quaternary structure, heterotrimer of A, B and C subunits.

The enzyme catalyses L-glutamyl-tRNA(Gln) + L-glutamine + ATP + H2O = L-glutaminyl-tRNA(Gln) + L-glutamate + ADP + phosphate + H(+). Its function is as follows. Allows the formation of correctly charged Gln-tRNA(Gln) through the transamidation of misacylated Glu-tRNA(Gln) in organisms which lack glutaminyl-tRNA synthetase. The reaction takes place in the presence of glutamine and ATP through an activated gamma-phospho-Glu-tRNA(Gln). The chain is Glutamyl-tRNA(Gln) amidotransferase subunit A from Prochlorococcus marinus (strain SARG / CCMP1375 / SS120).